The primary structure comprises 316 residues: MAVQVVQAVQAVHLESDAFLVCLNHALSTEKEEVMGLCIGELNDDLRNDPKFTYTGTEMRTVAEKVDTVRIVHIHSVIILRRSDKRKDRVEISPEQLSAASTEAERLAELTGRPMRVVGWYHSHPHITVWPSHVDVRTQAMYQMMDQGFVGLIFSCFIEDKNTKTGRVLYTCFQSIQAQKSSESPRGPRDFWSSSQHISIEGQKEEERYERIEIPIHIVPHVTIGKVCLESAVELPKILCQEEQDAYRRIHSLTHLDSVTKIHNGSVFTKNLCSQMSAVSGPLLQWLEDRLEQNQQHVQELQQEKEELLQELSSLE.

An N-acetylalanine modification is found at Ala2. Positions 12–179 (VHLESDAFLV…YTCFQSIQAQ (168 aa)) constitute an MPN domain. Zn(2+)-binding residues include His122, His124, and Asp135. Positions 122–135 (HSHPHITVWPSHVD) match the JAMM motif motif. A Phosphoserine modification is found at Ser258.

This sequence belongs to the peptidase M67A family. BRCC36 subfamily. In terms of assembly, component of the ARISC complex, at least composed of UIMC1/RAP80, ABRAXAS1, BRCC3/BRCC36, BABAM2 and BABAM1/NBA1. Component of the BRCA1-A complex, at least composed of BRCA1, BARD1, UIMC1/RAP80, ABRAXAS1, BRCC3/BRCC36, BABAM2 and BABAM1/NBA1. In the BRCA1-A complex, interacts directly with ABRAXAS1 and BABAM2. Component of the BRISC complex, at least composed of ABRAXAS2, BRCC3/BRCC36, BABAM2 and BABAM1/NBA1. Identified in a complex with SHMT2 and the other subunits of the BRISC complex. In the BRISC complex, interacts directly with ABRAXAS2. Identified in a complex with ABRAXAS2 and NUMA1. The BRISC complex interacts with the CSN complex. Component of the BRCA1/BRCA2 containing complex (BRCC), which also contains BRCA1, BRCA2, BARD1, BABAM2 and RAD51. BRCC is a ubiquitin E3 ligase complex that enhances cellular survival following DNA damage. Interacts with BRCA1. Binds polyubiquitin. Interacts with PWWP2B. Interacts with HDAC1; this interaction is enhanced in the presence of PWWP2B. It depends on Zn(2+) as a cofactor.

The protein resides in the nucleus. Its subcellular location is the cytoplasm. It is found in the cytoskeleton. It localises to the spindle pole. Functionally, metalloprotease that specifically cleaves 'Lys-63'-linked polyubiquitin chains. Does not have activity toward 'Lys-48'-linked polyubiquitin chains. Component of the BRCA1-A complex, a complex that specifically recognizes 'Lys-63'-linked ubiquitinated histones H2A and H2AX at DNA lesions sites, leading to target the BRCA1-BARD1 heterodimer to sites of DNA damage at double-strand breaks (DSBs). In the BRCA1-A complex, it specifically removes 'Lys-63'-linked ubiquitin on histones H2A and H2AX, antagonizing the RNF8-dependent ubiquitination at double-strand breaks (DSBs). Catalytic subunit of the BRISC complex, a multiprotein complex that specifically cleaves 'Lys-63'-linked ubiquitin in various substrates. Mediates the specific 'Lys-63'-specific deubiquitination associated with the COP9 signalosome complex (CSN), via the interaction of the BRISC complex with the CSN complex. The BRISC complex is required for normal mitotic spindle assembly and microtubule attachment to kinetochores via its role in deubiquitinating NUMA1. Plays a role in interferon signaling via its role in the deubiquitination of the interferon receptor IFNAR1; deubiquitination increases IFNAR1 activity by enhancing its stability and cell surface expression. Acts as a regulator of the NLRP3 inflammasome by mediating deubiquitination of NLRP3, leading to NLRP3 inflammasome assembly. Down-regulates the response to bacterial lipopolysaccharide (LPS) via its role in IFNAR1 deubiquitination. Deubiquitinates HDAC1 and PWWP2B leading to their stabilization. The polypeptide is Lys-63-specific deubiquitinase BRCC36 (BRCC3) (Bos taurus (Bovine)).